We begin with the raw amino-acid sequence, 278 residues long: MGDIINGKAESQKYKDKIIEFINERKKQGLDIPCIASITVGDDGGSLYYVNNQKKVSESLGIEFKSIFLDESIREEELIKLIEGLNVDNKIHGIMLQLPLPNHIDAKLVTSKIDANKDIDSLTDINTGKFYKGEKSFIPCTPRSIINLIKSLNVDICGKNAVVIGRSNIVGKPTAQLLLNENATVTICHSRTQNLKDICKKADIIVSAIGRPGFITDEFVNEKSIVIDVGTTVVDGKLRGDVVFDEVIKKAAYVTPVPGGVGAMTTTMLILNVCEALK.

NADP(+) is bound by residues 165–167, Ser-190, and Thr-231; that span reads GRS.

It belongs to the tetrahydrofolate dehydrogenase/cyclohydrolase family. As to quaternary structure, homodimer.

It carries out the reaction (6R)-5,10-methylene-5,6,7,8-tetrahydrofolate + NADP(+) = (6R)-5,10-methenyltetrahydrofolate + NADPH. It catalyses the reaction (6R)-5,10-methenyltetrahydrofolate + H2O = (6R)-10-formyltetrahydrofolate + H(+). Its pathway is one-carbon metabolism; tetrahydrofolate interconversion. Catalyzes the oxidation of 5,10-methylenetetrahydrofolate to 5,10-methenyltetrahydrofolate and then the hydrolysis of 5,10-methenyltetrahydrofolate to 10-formyltetrahydrofolate. The sequence is that of Bifunctional protein FolD from Clostridium acetobutylicum (strain ATCC 824 / DSM 792 / JCM 1419 / IAM 19013 / LMG 5710 / NBRC 13948 / NRRL B-527 / VKM B-1787 / 2291 / W).